Reading from the N-terminus, the 553-residue chain is Formate--tetrahydrofolate ligase (553 aa).

65–72 (TPAGEGKS) is an ATP binding site.

This sequence belongs to the formate--tetrahydrofolate ligase family.

It carries out the reaction (6S)-5,6,7,8-tetrahydrofolate + formate + ATP = (6R)-10-formyltetrahydrofolate + ADP + phosphate. Its pathway is one-carbon metabolism; tetrahydrofolate interconversion. In Brachyspira hyodysenteriae (strain ATCC 49526 / WA1), this protein is Formate--tetrahydrofolate ligase.